The chain runs to 918 residues: Protein translocase subunit SecA (918 aa).

Residues Q87, 105-109, and D516 contribute to the ATP site; that span reads GEGKT. Residues C902, C904, C913, and H914 each contribute to the Zn(2+) site.

The protein belongs to the SecA family. As to quaternary structure, monomer and homodimer. Part of the essential Sec protein translocation apparatus which comprises SecA, SecYEG and auxiliary proteins SecDF-YajC and YidC. The cofactor is Zn(2+).

It is found in the cell inner membrane. The protein resides in the cytoplasm. The catalysed reaction is ATP + H2O + cellular proteinSide 1 = ADP + phosphate + cellular proteinSide 2.. Its function is as follows. Part of the Sec protein translocase complex. Interacts with the SecYEG preprotein conducting channel. Has a central role in coupling the hydrolysis of ATP to the transfer of proteins into and across the cell membrane, serving both as a receptor for the preprotein-SecB complex and as an ATP-driven molecular motor driving the stepwise translocation of polypeptide chains across the membrane. This chain is Protein translocase subunit SecA, found in Methylibium petroleiphilum (strain ATCC BAA-1232 / LMG 22953 / PM1).